A 1517-amino-acid chain; its full sequence is DNA-directed RNA polymerase subunit beta' (1517 aa).

Zn(2+) contacts are provided by Cys71, Cys73, Cys86, and Cys89. Asp482, Asp484, and Asp486 together coordinate Mg(2+). Zn(2+) is bound by residues Cys812, Cys886, Cys893, and Cys896.

The protein belongs to the RNA polymerase beta' chain family. The RNAP catalytic core consists of 2 alpha, 1 beta, 1 beta' and 1 omega subunit. When a sigma factor is associated with the core the holoenzyme is formed, which can initiate transcription. The cofactor is Mg(2+). Requires Zn(2+) as cofactor.

The catalysed reaction is RNA(n) + a ribonucleoside 5'-triphosphate = RNA(n+1) + diphosphate. Functionally, DNA-dependent RNA polymerase catalyzes the transcription of DNA into RNA using the four ribonucleoside triphosphates as substrates. The polypeptide is DNA-directed RNA polymerase subunit beta' (Campylobacter jejuni (strain RM1221)).